The sequence spans 181 residues: Transcription termination/antitermination protein NusG (181 aa).

One can recognise a KOW domain in the interval 130 to 161; that stretch reads PGEMVRVNDGPFADFNGVVEEVDYEKSRLKVS.

It belongs to the NusG family. Monomer. Interacts with the transcription termination factor Rho and with RNA polymerase.

Participates in transcription elongation, termination and antitermination. In the absence of Rho, increases the rate of transcription elongation by the RNA polymerase (RNAP), probably by partially suppressing pausing. In the presence of Rho, modulates most Rho-dependent termination events by interacting with the RNAP to render the complex more susceptible to the termination activity of Rho. May be required to overcome a kinetic limitation of Rho to function at certain terminators. Also involved in ribosomal RNA transcriptional antitermination. The chain is Transcription termination/antitermination protein NusG from Shigella flexneri.